The chain runs to 227 residues: PKHD-type hydroxylase Bpro_3048 (227 aa).

One can recognise a Fe2OG dioxygenase domain in the interval 78–179; the sequence is KIFTPRINRY…RLACFFWVES (102 aa). The Fe cation site is built by H97, D99, and H160. R170 serves as a coordination point for 2-oxoglutarate.

Fe(2+) is required as a cofactor. The cofactor is L-ascorbate.

This Polaromonas sp. (strain JS666 / ATCC BAA-500) protein is PKHD-type hydroxylase Bpro_3048.